Reading from the N-terminus, the 448-residue chain is Antilisterial bacteriocin subtilosin biosynthesis protein AlbA (448 aa).

A Radical SAM core domain is found at 115–329 (FPMPLHATFE…EQHVIDEFKD (215 aa)). 6 residues coordinate [4Fe-4S] cluster: Cys-129, Cys-133, Cys-136, Cys-408, Cys-414, and Cys-417.

It depends on [4Fe-4S] cluster as a cofactor.

The protein resides in the cytoplasm. In terms of biological role, catalyzes the formation of 3 thioether bonds during production of the sactipeptide subtilosin from SboA. In vitro the thioether bonds cannot be made in the absence of the SboA propeptide, suggesting this is the first reaction in subtilosin maturation. In vitro, in the absence of a second substrate, cleaves S-adenosyl-L-methionine into Met and 5'-dA. The chain is Antilisterial bacteriocin subtilosin biosynthesis protein AlbA (albA) from Bacillus subtilis (strain 168).